We begin with the raw amino-acid sequence, 466 residues long: tRNA dimethylallyltransferase 2 (466 aa).

27-34 (GPTGSGKS) serves as a coordination point for ATP. Substrate is bound at residue 29–34 (TGSGKS). The interval 52–55 (DAMQ) is interaction with substrate tRNA. The interval 433-466 (WEHHKQGRTHRKRTTRHKNSQTYKNREVQEAEVN) is disordered. Residues 437–451 (KQGRTHRKRTTRHKN) are compositionally biased toward basic residues. Basic and acidic residues predominate over residues 456–466 (KNREVQEAEVN).

Belongs to the IPP transferase family. Mg(2+) is required as a cofactor. Expressed ubiquitously, with highest expression in proliferating tissues.

The protein resides in the cytoplasm. The catalysed reaction is adenosine(37) in tRNA + dimethylallyl diphosphate = N(6)-dimethylallyladenosine(37) in tRNA + diphosphate. Catalyzes the transfer of a dimethylallyl group onto the adenine at position 37 in tRNAs that read codons beginning with uridine, leading to the formation of N6-(dimethylallyl)adenosine (i(6)A). Involved in the cis-type cytokinin biosynthesis. The polypeptide is tRNA dimethylallyltransferase 2 (IPT2) (Arabidopsis thaliana (Mouse-ear cress)).